The following is a 571-amino-acid chain: Proline--tRNA ligase (571 aa).

It belongs to the class-II aminoacyl-tRNA synthetase family. ProS type 1 subfamily. In terms of assembly, homodimer.

It is found in the cytoplasm. It catalyses the reaction tRNA(Pro) + L-proline + ATP = L-prolyl-tRNA(Pro) + AMP + diphosphate. In terms of biological role, catalyzes the attachment of proline to tRNA(Pro) in a two-step reaction: proline is first activated by ATP to form Pro-AMP and then transferred to the acceptor end of tRNA(Pro). As ProRS can inadvertently accommodate and process non-cognate amino acids such as alanine and cysteine, to avoid such errors it has two additional distinct editing activities against alanine. One activity is designated as 'pretransfer' editing and involves the tRNA(Pro)-independent hydrolysis of activated Ala-AMP. The other activity is designated 'posttransfer' editing and involves deacylation of mischarged Ala-tRNA(Pro). The misacylated Cys-tRNA(Pro) is not edited by ProRS. The sequence is that of Proline--tRNA ligase from Vibrio campbellii (strain ATCC BAA-1116).